A 248-amino-acid polypeptide reads, in one-letter code: MAGHSQFKNIMHRKGKQDAQRSKAFSKLAREITVAAKLGTPDPAMNPRLRAAVIAARAENMPKDNIERAIKKAIGGDSENYDEIRYEGYGPGGVAVIVEALTDNRNRAASDIRSFFTKSGGNLGETGSVSFMFDRTGVIEYDADKASADDMLEAAIEAGADDVASSESGHEVYASQDTFRDVAKALEAKFGEARKAALIWKPQNTVAVDDETGEKLFKLMDHLNDHDDVQNVYANFEVSDALMAKMAG.

Residues 1–22 (MAGHSQFKNIMHRKGKQDAQRS) are disordered.

The protein belongs to the TACO1 family.

The protein localises to the cytoplasm. This is Probable transcriptional regulatory protein RPB_4273 from Rhodopseudomonas palustris (strain HaA2).